We begin with the raw amino-acid sequence, 1925 residues long: Plexin-D1 (1925 aa).

Residues Met1 to Leu21 show a composition bias toward low complexity. The segment at Met1–His26 is disordered. The first 48 residues, Met1–Ala48, serve as a signal peptide directing secretion. The 500-residue stretch at Leu49 to Val548 folds into the Sema domain. Residues Leu49–Ala1271 lie on the Extracellular side of the membrane. Disulfide bonds link Cys106–Cys116 and Cys142–Cys150. Asn157 and Asn226 each carry an N-linked (GlcNAc...) asparagine glycan. Intrachain disulfides connect Cys324-Cys447 and Cys347-Cys391. The N-linked (GlcNAc...) asparagine glycan is linked to Asn483. 5 cysteine pairs are disulfide-bonded: Cys551-Cys568, Cys557-Cys602, Cys560-Cys577, Cys571-Cys583, and Cys639-Cys663. IPT/TIG domains are found at residues Pro893–Gln977, Pro983–Phe1065, and Pro1071–Gly1145. Asn967 carries N-linked (GlcNAc...) asparagine glycosylation. The N-linked (GlcNAc...) asparagine glycan is linked to Asn1120. Residues Ile1272 to Val1292 form a helical membrane-spanning segment. Residues Phe1293–Ala1925 lie on the Cytoplasmic side of the membrane.

This sequence belongs to the plexin family. Interacts with NRP1 and SEMA4A. Interacts with SH3BP1; they dissociate upon SEMA3E binding to PLXND1 allowing SH3BP1 to transduce downstream signal through RAC1 inactivation. As to expression, detected in embryonic heart and vascular endothelium, brain, dorsal root ganglia, adrenal gland, lung mesenchyme, small intestine and in the ossification centers of vertebral bodies.

Its subcellular location is the cell membrane. It localises to the cell projection. The protein localises to the lamellipodium membrane. Its function is as follows. Cell surface receptor for SEMA4A and for class 3 semaphorins, such as SEMA3A, SEMA3C and SEMA3E. Plays an important role in cell-cell signaling, and in regulating the migration of a wide spectrum of cell types. Regulates the migration of thymocytes in the medulla. Regulates endothelial cell migration. Plays an important role in ensuring the specificity of synapse formation. Mediates anti-angiogenic signaling in response to SEMA3E. Required for normal development of the heart and vasculature. This Mus musculus (Mouse) protein is Plexin-D1 (Plxnd1).